The following is a 448-amino-acid chain: Glutamyl-tRNA reductase 2 (448 aa).

Substrate-binding positions include 50-53, Ser109, 114-116, and Gln120; these read TCER and ESD. The Nucleophile role is filled by Cys51. 190–195 contributes to the NADP(+) binding site; sequence GTGQVA. Residues 423–448 are disordered; that stretch reads DQAVPAYSPQPIGNTSNAAASATPRR. Positions 433 to 442 are enriched in polar residues; that stretch reads PIGNTSNAAA.

Belongs to the glutamyl-tRNA reductase family. Homodimer.

It carries out the reaction (S)-4-amino-5-oxopentanoate + tRNA(Glu) + NADP(+) = L-glutamyl-tRNA(Glu) + NADPH + H(+). The protein operates within porphyrin-containing compound metabolism; protoporphyrin-IX biosynthesis; 5-aminolevulinate from L-glutamyl-tRNA(Glu): step 1/2. Its function is as follows. Catalyzes the NADPH-dependent reduction of glutamyl-tRNA(Glu) to glutamate 1-semialdehyde (GSA). The protein is Glutamyl-tRNA reductase 2 of Nocardioides sp. (strain ATCC BAA-499 / JS614).